The sequence spans 110 residues: Nucleoid-associated protein PERMA_0533 (110 aa).

This sequence belongs to the YbaB/EbfC family. As to quaternary structure, homodimer.

The protein resides in the cytoplasm. Its subcellular location is the nucleoid. In terms of biological role, binds to DNA and alters its conformation. May be involved in regulation of gene expression, nucleoid organization and DNA protection. This chain is Nucleoid-associated protein PERMA_0533, found in Persephonella marina (strain DSM 14350 / EX-H1).